We begin with the raw amino-acid sequence, 111 residues long: Cystatin (111 aa).

The Cystatin domain occupies 3–103 (GGLSPRDVTD…CRFEVWSRPW (101 aa)). The short motif at 47–51 (QVVSG) is the Secondary area of contact element. Cysteines 65 and 81 form a disulfide.

It belongs to the cystatin family. In terms of tissue distribution, expressed by the venom gland.

The protein localises to the secreted. Inhibits various C1 cysteine proteases including cathepsin L, papain and cathepsin B. This protein has no toxic activity and its function in the venom is unknown. It may play a role as housekeeping or regulatory protein. The polypeptide is Cystatin (Bitis arietans (African puff adder)).